Reading from the N-terminus, the 969-residue chain is Alpha-glucosidase (969 aa).

The N-terminal stretch at 1–24 (MMISTAYQSLFLTALFSAISIAVG) is a signal peptide. 14 N-linked (GlcNAc...) asparagine glycosylation sites follow: Asn37, Asn67, Asn99, Asn116, Asn139, Asn146, Asn209, Asn245, Asn249, Asn331, Asn406, Asn429, Asn462, and Asn470. The active-site Nucleophile is Asp481. Residue Glu484 is part of the active site. N-linked (GlcNAc...) asparagine glycans are attached at residues Asn520, Asn523, and Asn589. Asp647 functions as the Proton donor in the catalytic mechanism. Asn648, Asn801, Asn810, Asn821, Asn885, Asn915, Asn934, Asn942, Asn954, and Asn966 each carry an N-linked (GlcNAc...) asparagine glycan.

It belongs to the glycosyl hydrolase 31 family.

It localises to the secreted. The catalysed reaction is Hydrolysis of terminal, non-reducing (1-&gt;4)-linked alpha-D-glucose residues with release of alpha-D-glucose.. In terms of biological role, hydrolyzes malto-oligosaccharides, but has a low activity toward soluble starch. The sequence is that of Alpha-glucosidase (agl1) from Schizosaccharomyces pombe (strain 972 / ATCC 24843) (Fission yeast).